The following is a 250-amino-acid chain: MKYNNHDKIRDFIIIEAYMFRFKKKVKPEVDMTIKEFILLTYLFHQQENTLPFKKIVSDLCYKQSDLVQHIKVLVKHSYISKVRSKIDERNTYISISEEQREKIAERVTLFDQIIKQFNLADQSESQMIPKDSKEFLNLMMYTMYFKNIIKKHLTLSFVEFTILAIITSQNKNIVLLKDLIETIHHKYPQTVRALNNLKKQGYLIKERSTEDERKILIHMNDAQQDHAEQLLAQVNQLLADKNHLHLVFE.

2 consecutive DNA-binding regions (H-T-H motif) follow at residues 53-76 and 177-200; these read FKKI…VLVK and LKDL…NLKK.

Belongs to the SarA family.

It is found in the cytoplasm. Transcriptional regulator that controls expression of some virulence factors in a cell density-dependent manner. The protein is HTH-type transcriptional regulator SarS (sarS) of Staphylococcus aureus (strain MRSA252).